The chain runs to 302 residues: Bifunctional protein FolD (302 aa).

Residues 165–167 (GRS), Ser190, and Ile231 each bind NADP(+).

The protein belongs to the tetrahydrofolate dehydrogenase/cyclohydrolase family. Homodimer.

The catalysed reaction is (6R)-5,10-methylene-5,6,7,8-tetrahydrofolate + NADP(+) = (6R)-5,10-methenyltetrahydrofolate + NADPH. It carries out the reaction (6R)-5,10-methenyltetrahydrofolate + H2O = (6R)-10-formyltetrahydrofolate + H(+). It functions in the pathway one-carbon metabolism; tetrahydrofolate interconversion. In terms of biological role, catalyzes the oxidation of 5,10-methylenetetrahydrofolate to 5,10-methenyltetrahydrofolate and then the hydrolysis of 5,10-methenyltetrahydrofolate to 10-formyltetrahydrofolate. The polypeptide is Bifunctional protein FolD (Prochlorococcus marinus (strain MIT 9313)).